The chain runs to 343 residues: Glyceraldehyde-3-phosphate dehydrogenase 1 (343 aa).

NAD(+) contacts are provided by residues 13–14, Asp-35, Arg-79, and Ser-121; that span reads RI. D-glyceraldehyde 3-phosphate contacts are provided by residues 154–156, Thr-185, 214–215, and Arg-237; these read SCT and TG. The active-site Nucleophile is the Cys-155. Residue Asn-319 participates in NAD(+) binding.

It belongs to the glyceraldehyde-3-phosphate dehydrogenase family. As to quaternary structure, homotetramer.

The protein resides in the cytoplasm. The enzyme catalyses D-glyceraldehyde 3-phosphate + phosphate + NAD(+) = (2R)-3-phospho-glyceroyl phosphate + NADH + H(+). It functions in the pathway carbohydrate degradation; glycolysis; pyruvate from D-glyceraldehyde 3-phosphate: step 1/5. Catalyzes the oxidative phosphorylation of glyceraldehyde 3-phosphate (G3P) to 1,3-bisphosphoglycerate (BPG) using the cofactor NAD. The first reaction step involves the formation of a hemiacetal intermediate between G3P and a cysteine residue, and this hemiacetal intermediate is then oxidized to a thioester, with concomitant reduction of NAD to NADH. The reduced NADH is then exchanged with the second NAD, and the thioester is attacked by a nucleophilic inorganic phosphate to produce BPG. The protein is Glyceraldehyde-3-phosphate dehydrogenase 1 (gap1) of Nostoc sp. (strain PCC 7120 / SAG 25.82 / UTEX 2576).